A 172-amino-acid polypeptide reads, in one-letter code: Nicotinamide-nucleotide adenylyltransferase (172 aa).

This sequence belongs to the archaeal NMN adenylyltransferase family.

It localises to the cytoplasm. It carries out the reaction beta-nicotinamide D-ribonucleotide + ATP + H(+) = diphosphate + NAD(+). The protein operates within cofactor biosynthesis; NAD(+) biosynthesis; NAD(+) from nicotinamide D-ribonucleotide: step 1/1. In Saccharolobus solfataricus (strain ATCC 35092 / DSM 1617 / JCM 11322 / P2) (Sulfolobus solfataricus), this protein is Nicotinamide-nucleotide adenylyltransferase.